We begin with the raw amino-acid sequence, 196 residues long: MSRIFAYCRISTLDQTTENQRREIESAGFKIKPQQIIEEHISGSAATSERPGFNRLLARLKCGDQLIVTKLDRLGCNAMDIRKTVEQLTETGIRVHCLALGGIDLTSPTGKMMMQVISAVAEFERDLLLERTHSGIVRARGAGKRFGRPPVLNEEQKQVVFERIKSGVSISAIAREFKTSRQTILRAKAKLQTPDI.

The region spanning 3–143 is the Resolvase/invertase-type recombinase catalytic domain; that stretch reads RIFAYCRIST…SGIVRARGAG (141 aa). The active-site O-(5'-phospho-DNA)-serine intermediate is Ser-11.

Belongs to the site-specific recombinase resolvase family.

The sequence is that of Serine recombinase PinR (pinR) from Escherichia coli (strain K12).